A 313-amino-acid chain; its full sequence is Foldase protein PrsA (313 aa).

A signal peptide spans Met-1 to Ala-20. A lipid anchor (N-palmitoyl cysteine) is attached at Cys-21. A lipid anchor (S-diacylglycerol cysteine) is attached at Cys-21. In terms of domain architecture, PpiC spans Thr-143–Lys-241.

It belongs to the PrsA family.

The protein localises to the cell membrane. It catalyses the reaction [protein]-peptidylproline (omega=180) = [protein]-peptidylproline (omega=0). Functionally, plays a major role in protein secretion by helping the post-translocational extracellular folding of several secreted proteins. This Streptococcus pneumoniae (strain P1031) protein is Foldase protein PrsA.